The chain runs to 766 residues: Pyrophosphate-energized vacuolar membrane proton pump (766 aa).

The Intravacuolar portion of the chain corresponds to 2 to 8 (GAAILPD). The helical transmembrane segment at 9 to 35 (LGTEILIPVCAVIGIAFALFQWLLVSK) threads the bilayer. The Cytoplasmic portion of the chain corresponds to 36–84 (VKLSAVRDASPNAAAKNGYNDYLIEEEEGINDHNVVVKCAEIQNAISEG). Residues 85-114 (ATSFLFTEYKYVGIFMVAFAILIFLFLGSV) form a helical membrane-spanning segment. The Intravacuolar portion of the chain corresponds to 115–135 (EGFSTSPQACSYDKTKTCKPA). A disulfide bridge connects residues cysteine 124 and cysteine 132. A helical transmembrane segment spans residues 136–163 (LATAIFSTVSFLLGGVTSLVSGFLGMKI). Topologically, residues 164–186 (ATYANARTTLEARKGVGKAFITA) are cytoplasmic. The helical transmembrane segment at 187 to 216 (FRSGAVMGFLLAANGLLVLYIAINLFKIYY) threads the bilayer. Over 217–219 (GDD) the chain is Intravacuolar. A helical membrane pass occupies residues 220 to 248 (WGGLFEAITGYGLGGSSMALFGRVGGGIY). The Cytoplasmic segment spans residues 249 to 286 (TKAADVGADLVGKVERNIPEDDPRNPAVIADNVGDNVG). Residue lysine 250 coordinates substrate. Residues aspartate 253, aspartate 257, and aspartate 283 each coordinate Mg(2+). The chain crosses the membrane as a helical span at residues 287 to 312 (DIAGMGSDLFGSYAESSCAALVVASI). Over 313 to 320 (SSFGLNHE) the chain is Intravacuolar. The chain crosses the membrane as a helical span at residues 321-346 (LTAMLYPLIVSSVGILVCLLTTLFAT). Topologically, residues 347–354 (DFFEIKAV) are cytoplasmic. The helical transmembrane segment at 355–382 (KEIEPALKKQLVISTVLMTIGVAVVSFV) threads the bilayer. The Intravacuolar portion of the chain corresponds to 383-401 (ALPTSFTIFNFGVQKDVKS). Residues 402 to 425 (WQLFLCVAVGLWAGLIIGFVTEYY) traverse the membrane as a helical segment. Over 426-447 (TSNAYSPVQDVADSCRTGAATN) the chain is Cytoplasmic. Residues 448–472 (VIFGLALGYKSVIIPIFAIAISIFV) traverse the membrane as a helical segment. Residues 473–478 (SFTFAA) are Intravacuolar-facing. A helical transmembrane segment spans residues 479 to 505 (MYGIAVAALGMLSTIATGLAIDAYGPI). Topologically, residues 506–534 (SDNAGGIAEMAGMSHRIRERTDALDAAGN) are cytoplasmic. Aspartate 507 and asparagine 534 together coordinate Mg(2+). The chain crosses the membrane as a helical span at residues 535–563 (TTAAIGKGFAIGSAALVSLALFGAFVSRA). The Intravacuolar segment spans residues 564 to 573 (SITTVDVLTP). Residues 574 to 602 (KVFIGLIVGAMLPYWFSAMTMKSVGSAAL) form a helical membrane-spanning segment. Residues 603–631 (KMVEEVRRQFNTIPGLMEGTAKPDYATCV) are Cytoplasmic-facing. A helical transmembrane segment spans residues 632–660 (KISTDASIKEMIPPGALVMLTPLVVGILF). Glycine 661 is a topological domain (intravacuolar). The helical transmembrane segment at 662–689 (VETLSGVLAGSLVSGVQIAISASNTGGA) threads the bilayer. Residues 690-732 (WDNAKKYIEAGASEHARSLGPKGSDCHKAAVIGDTIGDPLKDT) are Cytoplasmic-facing. Positions 691 and 727 each coordinate Mg(2+). Position 730 (lysine 730) interacts with substrate. The helical transmembrane segment at 733 to 758 (SGPSLNILIKLMAVESLVFAPFFATH) threads the bilayer. The Intravacuolar segment spans residues 759-765 (GGLLFKI).

The protein belongs to the H(+)-translocating pyrophosphatase (TC 3.A.10) family. K(+)-stimulated subfamily. Homodimer.

It localises to the vacuole membrane. The enzyme catalyses diphosphate + H2O + H(+)(in) = 2 phosphate + 2 H(+)(out). With respect to regulation, inhibited by excess pyrophosphate as well as excess Mg(2+). Inhibition by ATP, GTP, and CTP is reversed by increasing the Mg(2+) concentration. This suggests that the substrate is a particular metal complex such as MgPPi(2-). Modification of Asp-283 with DCCD abolishes pyrophosphatase activity. Functionally, proton-translocating inorganic pyrophosphatase that contributes to the transtonoplast (from cytosol to vacuole lumen) H(+)-electrochemical potential difference. It establishes a proton gradient of similar and often greater magnitude than the H(+)-ATPase on the same membrane. This chain is Pyrophosphate-energized vacuolar membrane proton pump, found in Vigna radiata var. radiata (Mung bean).